The following is an 86-amino-acid chain: Large ribosomal subunit protein uL23 (86 aa).

It belongs to the universal ribosomal protein uL23 family. As to quaternary structure, part of the 50S ribosomal subunit. Contacts protein L29.

Its function is as follows. Binds to 23S rRNA. One of the proteins that surrounds the polypeptide exit tunnel on the outside of the ribosome. The chain is Large ribosomal subunit protein uL23 from Pyrococcus furiosus (strain ATCC 43587 / DSM 3638 / JCM 8422 / Vc1).